Reading from the N-terminus, the 402-residue chain is Imidazolonepropionase (402 aa).

Fe(3+) contacts are provided by His-66 and His-68. The Zn(2+) site is built by His-66 and His-68. Residues Arg-75, Tyr-138, and His-171 each contribute to the 4-imidazolone-5-propanoate site. Tyr-138 provides a ligand contact to N-formimidoyl-L-glutamate. His-236 contributes to the Fe(3+) binding site. His-236 serves as a coordination point for Zn(2+). Gln-239 provides a ligand contact to 4-imidazolone-5-propanoate. Fe(3+) is bound at residue Asp-311. Residue Asp-311 participates in Zn(2+) binding. Positions 313 and 315 each coordinate N-formimidoyl-L-glutamate. Thr-316 provides a ligand contact to 4-imidazolone-5-propanoate.

Belongs to the metallo-dependent hydrolases superfamily. HutI family. It depends on Zn(2+) as a cofactor. The cofactor is Fe(3+).

The protein resides in the cytoplasm. The enzyme catalyses 4-imidazolone-5-propanoate + H2O = N-formimidoyl-L-glutamate. Its pathway is amino-acid degradation; L-histidine degradation into L-glutamate; N-formimidoyl-L-glutamate from L-histidine: step 3/3. Catalyzes the hydrolytic cleavage of the carbon-nitrogen bond in imidazolone-5-propanoate to yield N-formimidoyl-L-glutamate. It is the third step in the universal histidine degradation pathway. The protein is Imidazolonepropionase of Pseudomonas aeruginosa (strain ATCC 15692 / DSM 22644 / CIP 104116 / JCM 14847 / LMG 12228 / 1C / PRS 101 / PAO1).